Here is a 255-residue protein sequence, read N- to C-terminus: 4-diphosphocytidyl-2-C-methyl-D-erythritol kinase (255 aa).

The active site involves K6. 95–105 serves as a coordination point for ATP; it reads PVCAGLGGGSS. The active site involves D137.

The protein belongs to the GHMP kinase family. IspE subfamily.

The catalysed reaction is 4-CDP-2-C-methyl-D-erythritol + ATP = 4-CDP-2-C-methyl-D-erythritol 2-phosphate + ADP + H(+). The protein operates within isoprenoid biosynthesis; isopentenyl diphosphate biosynthesis via DXP pathway; isopentenyl diphosphate from 1-deoxy-D-xylulose 5-phosphate: step 3/6. Catalyzes the phosphorylation of the position 2 hydroxy group of 4-diphosphocytidyl-2C-methyl-D-erythritol. The protein is 4-diphosphocytidyl-2-C-methyl-D-erythritol kinase of Campylobacter jejuni subsp. jejuni serotype O:23/36 (strain 81-176).